The sequence spans 359 residues: Trans-enoyl reductase mpsG (359 aa).

Positions 212, 259, and 278 each coordinate NADP(+).

The protein belongs to the zinc-containing alcohol dehydrogenase family. As to quaternary structure, monomer.

It functions in the pathway secondary metabolite biosynthesis. Its function is as follows. Trans-enoyl reductase; part of the gene cluster that mediates the biosynthesis of macrophasetins, 3-decalinoyltetramic acids (DTAs) which feature a tetramate (pyrrolidine-2,4-dione) unit connected to a decalin fragment and that have potent bioactivities. The PKS-NRPS mpsA together with its associated enoylreductase partner mpsG incorporate one unit of acetyl-CoA, seven units of malonyl-CoA, and one unit of L-alanine to assemble the linear tetramic acid intermediate corresponding to the backbone of macrophasetins. Without the Diels-Alderase mpsD, the mpsA/G product can undergo the non-enzymatic intramolecular Diels-Alder (IMDA) reaction to generate both macrophasetin A and macrophasetin B. Catalyzed by mpsD, the linear tetramic acid intermediate is thoroughly converted to macrophasetin A via the endo-IMDA reaction in a regioselective and stereoselective manner. Finally, the cytochrome P450 monooxygenase mpsF catalyzes the hydroxylation at C20 to yield the end product macrophasetin C. In Macrophomina phaseolina (strain MS6) (Charcoal rot fungus), this protein is Trans-enoyl reductase mpsG.